Here is a 1228-residue protein sequence, read N- to C-terminus: Calcium-transporting ATPase (1228 aa).

Residues 1–63 (MEEVIKNAHT…FELILNQFDD (63 aa)) lie on the Cytoplasmic side of the membrane. A helical transmembrane segment spans residues 64 to 81 (LLVKILLLAAFISFVLTL). Over 82 to 92 (LDMKHKKIEIC) the chain is Extracellular. A helical transmembrane segment spans residues 93-112 (DFIEPLVIVLILILNAAVGV). The Cytoplasmic portion of the chain corresponds to 113–270 (WQECNAEKSL…IDLFGQQLSK (158 aa)). The chain crosses the membrane as a helical span at residues 271-291 (IIFVICVTVWIINFKHFSDPI). The Extracellular portion of the chain corresponds to 292–300 (HGSFLYGCL). Residues 301 to 321 (YYFKISVALAVAAIPEGLPAV) form a helical membrane-spanning segment. The Cytoplasmic segment spans residues 322–974 (ITTCLALGTR…IYNNMKAFIR (653 aa)). Residue D358 is the 4-aspartylphosphate intermediate of the active site. Disordered regions lie at residues 452 to 478 (MKND…IPLK) and 562 to 613 (MPAE…LKNA). Over residues 589-604 (FFSSKNDNSHITSTLN) the composition is skewed to polar residues. K716 is an ATP binding site. Residues 975 to 994 (YLISSNIGEVASIFITALLG) form a helical membrane-spanning segment. Residues 995 to 1000 (IPDSLA) are Extracellular-facing. Residues 1001–1021 (PVQLLWVNLVTDGLPATALGF) form a helical membrane-spanning segment. Over 1022 to 1042 (NPPEHDVMKCKPRHKNDNLIN) the chain is Cytoplasmic. The chain crosses the membrane as a helical span at residues 1043 to 1067 (GLTLLRYIIIGTYVGIATVSIFVYW). Over 1068 to 1118 (FLFYPDSDMHTLINFYQLSHYNQCKAWNNFRVNKVYDMSEDHCSYFSAGKI) the chain is Extracellular. A helical membrane pass occupies residues 1119–1140 (KASTLSLSVLVLIEMFNALNAL). The Cytoplasmic segment spans residues 1141 to 1151 (SEYNSLFEIPP). A helical transmembrane segment spans residues 1152–1172 (WRNMYLVLATIGSLLLHVLIL). Residues 1173-1185 (YIPPLARIFGVVP) are Extracellular-facing. The chain crosses the membrane as a helical span at residues 1186 to 1206 (LSAYDWFLVFLWSFPVIILDE). The Cytoplasmic segment spans residues 1207–1228 (IIKFYAKRKLKEEQRTKKIKID).

This sequence belongs to the cation transport ATPase (P-type) (TC 3.A.3) family.

Its subcellular location is the membrane. The enzyme catalyses Ca(2+)(in) + ATP + H2O = Ca(2+)(out) + ADP + phosphate + H(+). This magnesium-dependent enzyme catalyzes the hydrolysis of ATP coupled with the transport of the calcium. The chain is Calcium-transporting ATPase (ATP6) from Plasmodium falciparum (isolate K1 / Thailand).